A 150-amino-acid polypeptide reads, in one-letter code: 3-hydroxyacyl-[acyl-carrier-protein] dehydratase FabZ (150 aa).

The active site involves H56.

It belongs to the thioester dehydratase family. FabZ subfamily.

It localises to the cytoplasm. The catalysed reaction is a (3R)-hydroxyacyl-[ACP] = a (2E)-enoyl-[ACP] + H2O. Functionally, involved in unsaturated fatty acids biosynthesis. Catalyzes the dehydration of short chain beta-hydroxyacyl-ACPs and long chain saturated and unsaturated beta-hydroxyacyl-ACPs. The sequence is that of 3-hydroxyacyl-[acyl-carrier-protein] dehydratase FabZ from Desulfotalea psychrophila (strain LSv54 / DSM 12343).